Here is a 235-residue protein sequence, read N- to C-terminus: Large ribosomal subunit protein uL2 (235 aa).

The disordered stretch occupies residues 197-218 (VAMNPVDHPHGGGEGKTSGGRH).

This sequence belongs to the universal ribosomal protein uL2 family. Part of the 50S ribosomal subunit. Forms a bridge to the 30S subunit in the 70S ribosome.

One of the primary rRNA binding proteins. Required for association of the 30S and 50S subunits to form the 70S ribosome, for tRNA binding and peptide bond formation. It has been suggested to have peptidyltransferase activity; this is somewhat controversial. Makes several contacts with the 16S rRNA in the 70S ribosome. The protein is Large ribosomal subunit protein uL2 (rplB) of Carsonella ruddii (strain PV).